A 204-amino-acid chain; its full sequence is Cytochrome bo(3) ubiquinol oxidase subunit 3 (204 aa).

The Cytoplasmic segment spans residues 1 to 31 (MATDTLTHATAHAHEHGHHDAGGTKIFGFWI). A helical transmembrane segment spans residues 32–50 (YLMSDCILFSILFATYAVL). The Periplasmic segment spans residues 51–66 (VNGTAGGPTGKDIFEL). A helical membrane pass occupies residues 67–85 (PFVLVETFLLLFSSITYGM). Residues 86–101 (AAIAMYKNNKSQVISW) lie on the Cytoplasmic side of the membrane. The chain crosses the membrane as a helical span at residues 102–120 (LALTWLFGAGFIGMEIYEF). Over 121-142 (HHLIVNGMGPDRSGFLSAFFAL) the chain is Periplasmic. A helical transmembrane segment spans residues 143-161 (VGTHGLHVTSGLIWMAVLM). Residues 162-184 (VQIARRGLTSTNRTRIMCLSLFW) are Cytoplasmic-facing. The helical transmembrane segment at 185–203 (HFLDVVWICVFTVVYLMGA) threads the bilayer. Residue Met-204 is a topological domain, periplasmic.

It belongs to the cytochrome c oxidase subunit 3 family. In terms of assembly, heterooctamer of two A chains, two B chains, two C chains and two D chains.

The protein resides in the cell inner membrane. Functionally, cytochrome bo(3) ubiquinol terminal oxidase is the component of the aerobic respiratory chain of E.coli that predominates when cells are grown at high aeration. Has proton pump activity across the membrane in addition to electron transfer, pumping 2 protons/electron. The chain is Cytochrome bo(3) ubiquinol oxidase subunit 3 (cyoC) from Escherichia coli O6:H1 (strain CFT073 / ATCC 700928 / UPEC).